The primary structure comprises 145 residues: Large ribosomal subunit protein bL9 (145 aa).

This sequence belongs to the bacterial ribosomal protein bL9 family.

Functionally, binds to the 23S rRNA. This chain is Large ribosomal subunit protein bL9, found in Mesomycoplasma hyopneumoniae (strain J / ATCC 25934 / NCTC 10110) (Mycoplasma hyopneumoniae).